Consider the following 1581-residue polypeptide: Ankyrin repeat domain-containing protein 26 (1581 aa).

The tract at residues 1–22 (MKKIFGFRSKGPSPLGPSARPR) is disordered. Residue Ser-13 is modified to Phosphoserine. ANK repeat units lie at residues 46 to 76 (KDMG…GVND), 80 to 109 (KDRT…EIDA), 113 to 142 (ESST…DPNV), 146 to 175 (SGNT…NIEA), and 179 to 208 (DDLT…SIHA). 4 disordered regions span residues 225–270 (RLQR…FDNK), 299–343 (LDNG…PVEG), 361–381 (SASQ…WHKS), and 488–652 (VLNK…QTAA). Residues 229 to 250 (SENSNPVDNGSEDGSLTRSYNT) show a composition bias toward polar residues. Residues Ser-239 and Ser-260 each carry the phosphoserine modification. Positions 308–319 (SDSPSESEDAIE) are enriched in acidic residues. Polar residues predominate over residues 327–337 (RVQTLSPSRQS). Residues 367–381 (PNHDNLTRADGWHKS) show a composition bias toward basic and acidic residues. Over residues 491–504 (KTETVGMTDAQTFK) the composition is skewed to polar residues. Composition is skewed to basic and acidic residues over residues 505–516 (SEPESVSREEQT), 524–538 (SQQK…KNNE), and 585–601 (KEAK…REPA). The residue at position 511 (Ser-511) is a Phosphoserine. 4 coiled-coil regions span residues 715–845 (RSHC…NARM), 876–1345 (HEKE…MVEH), 1396–1470 (RSQM…RSLL), and 1521–1550 (LTKM…FCRV).

As to quaternary structure, interacts with TRIO. Interacts with GPS2. Interacts with CCDC85B. Interacts with HMMR. As to expression, widely expressed. Expressed in the arcuate and ventromedial nuclei within the hypothalamus and in the ependyma and the circumventricular organs (at protein level).

It localises to the cytoplasm. The protein resides in the cytosol. Functionally, acts as a regulator of adipogenesis. Involved in the regulation of the feeding behavior. This chain is Ankyrin repeat domain-containing protein 26 (Ankrd26), found in Mus musculus (Mouse).